The chain runs to 88 residues: Putative regulatory protein Ava_1474 (88 aa).

The protein belongs to the RemA family.

This Trichormus variabilis (strain ATCC 29413 / PCC 7937) (Anabaena variabilis) protein is Putative regulatory protein Ava_1474.